The chain runs to 824 residues: U-box domain-containing protein 24 (824 aa).

One can recognise a U-box domain in the interval 13-92 (GAFEAFVCPL…HEWRARNEEK (80 aa)). 9 ARM repeats span residues 133–172 (AASKDLVRRRGVLRAVAEMLKSGSRRLRLKSLQVLRVLVE), 175–214 (DDNKEELGKGDTIRTIIKFLSNEHVQERELAVSLLHELSG), 217–258 (PTCE…NLDR), 260–299 (DANVKQMADNGRLQPLLTRLLRGEPDTRVAMADYLGELAL), 300–339 (ANDDKAAVAEQAGPLLVGMLRTGATPAKEATLKALREISS), 341–385 (EASA…NLVA), 396–435 (DDDEDDDGGGGGRGRRRTLLSEDVVHSQLHLISNTGPAIG), 441–481 (VLAG…DIRV), and 486–525 (LLRNLAPYMGAELADALGGSLSSLLRAISSDGGGVTEEQA).

As to quaternary structure, interacts with BZR1, BZR2, BZR3 and GSK2. In terms of processing, auto-ubiquitinated. Phosphorylated by GSK2. Phosphorylation of PUB24 increases its cellular stability.

The protein localises to the cytoplasm. The protein resides in the cytosol. Its subcellular location is the nucleus. The catalysed reaction is S-ubiquitinyl-[E2 ubiquitin-conjugating enzyme]-L-cysteine + [acceptor protein]-L-lysine = [E2 ubiquitin-conjugating enzyme]-L-cysteine + N(6)-ubiquitinyl-[acceptor protein]-L-lysine.. The protein operates within protein modification; protein ubiquitination. In terms of biological role, E3 ubiquitin-protein ligase that functions as a negative regulator of brassinosteroid (BR) signaling. Targets BZR1, a positive regulator of BR signaling pathway, and promotes its degradation via the ubiquitin-26S proteasome pathway. This is U-box domain-containing protein 24 from Oryza sativa subsp. japonica (Rice).